The primary structure comprises 209 residues: Uracil phosphoribosyltransferase (209 aa).

Residues Arg-79, Arg-104, and 131-139 (DPMLATGNS) contribute to the 5-phospho-alpha-D-ribose 1-diphosphate site. Residues Ile-194 and 199 to 201 (GDA) each bind uracil. Asp-200 is a 5-phospho-alpha-D-ribose 1-diphosphate binding site.

It belongs to the UPRTase family. Mg(2+) serves as cofactor.

The enzyme catalyses UMP + diphosphate = 5-phospho-alpha-D-ribose 1-diphosphate + uracil. Its pathway is pyrimidine metabolism; UMP biosynthesis via salvage pathway; UMP from uracil: step 1/1. With respect to regulation, allosterically activated by GTP. Its function is as follows. Catalyzes the conversion of uracil and 5-phospho-alpha-D-ribose 1-diphosphate (PRPP) to UMP and diphosphate. The protein is Uracil phosphoribosyltransferase of Sinorhizobium medicae (strain WSM419) (Ensifer medicae).